The following is a 489-amino-acid chain: Acetyl-coenzyme A carboxylase carboxyl transferase subunit beta, chloroplastic (489 aa).

One can recognise a CoA carboxyltransferase N-terminal domain in the interval 225–489 (LWIQCDNCYG…FFPLNKNEIK (265 aa)). Cysteine 229, cysteine 232, cysteine 245, and cysteine 248 together coordinate Zn(2+). A C4-type zinc finger spans residues 229–248 (CDNCYGLKYKKVEMNVCEEC).

The protein belongs to the AccD/PCCB family. Acetyl-CoA carboxylase is a heterohexamer composed of biotin carboxyl carrier protein, biotin carboxylase and 2 subunits each of ACCase subunit alpha and ACCase plastid-coded subunit beta (accD). Zn(2+) serves as cofactor.

Its subcellular location is the plastid. It is found in the chloroplast stroma. The enzyme catalyses N(6)-carboxybiotinyl-L-lysyl-[protein] + acetyl-CoA = N(6)-biotinyl-L-lysyl-[protein] + malonyl-CoA. The protein operates within lipid metabolism; malonyl-CoA biosynthesis; malonyl-CoA from acetyl-CoA: step 1/1. Component of the acetyl coenzyme A carboxylase (ACC) complex. Biotin carboxylase (BC) catalyzes the carboxylation of biotin on its carrier protein (BCCP) and then the CO(2) group is transferred by the transcarboxylase to acetyl-CoA to form malonyl-CoA. The polypeptide is Acetyl-coenzyme A carboxylase carboxyl transferase subunit beta, chloroplastic (Brassica napus (Rape)).